Here is an 81-residue protein sequence, read N- to C-terminus: ATP synthase subunit c, chloroplastic (81 aa).

Helical transmembrane passes span 3-23 (PLIA…ASIG) and 57-77 (LAFM…LLFA).

Belongs to the ATPase C chain family. In terms of assembly, F-type ATPases have 2 components, F(1) - the catalytic core - and F(0) - the membrane proton channel. F(1) has five subunits: alpha(3), beta(3), gamma(1), delta(1), epsilon(1). F(0) has four main subunits: a(1), b(1), b'(1) and c(10-14). The alpha and beta chains form an alternating ring which encloses part of the gamma chain. F(1) is attached to F(0) by a central stalk formed by the gamma and epsilon chains, while a peripheral stalk is formed by the delta, b and b' chains.

The protein resides in the plastid. The protein localises to the chloroplast thylakoid membrane. Its function is as follows. F(1)F(0) ATP synthase produces ATP from ADP in the presence of a proton or sodium gradient. F-type ATPases consist of two structural domains, F(1) containing the extramembraneous catalytic core and F(0) containing the membrane proton channel, linked together by a central stalk and a peripheral stalk. During catalysis, ATP synthesis in the catalytic domain of F(1) is coupled via a rotary mechanism of the central stalk subunits to proton translocation. Functionally, key component of the F(0) channel; it plays a direct role in translocation across the membrane. A homomeric c-ring of between 10-14 subunits forms the central stalk rotor element with the F(1) delta and epsilon subunits. The sequence is that of ATP synthase subunit c, chloroplastic from Pisum sativum (Garden pea).